The chain runs to 218 residues: 7-cyano-7-deazaguanine synthase (218 aa).

11-21 (LSGGMDSATLL) contacts ATP. Residues C193, C201, C204, and C207 each contribute to the Zn(2+) site.

The protein belongs to the QueC family. Zn(2+) serves as cofactor.

It carries out the reaction 7-carboxy-7-deazaguanine + NH4(+) + ATP = 7-cyano-7-deazaguanine + ADP + phosphate + H2O + H(+). It functions in the pathway purine metabolism; 7-cyano-7-deazaguanine biosynthesis. In terms of biological role, catalyzes the ATP-dependent conversion of 7-carboxy-7-deazaguanine (CDG) to 7-cyano-7-deazaguanine (preQ(0)). This chain is 7-cyano-7-deazaguanine synthase, found in Aquifex aeolicus (strain VF5).